The chain runs to 91 residues: MANIKSKEKRILTNEKARVRNAAMKSHVRLAIKKAKRAIEEKNENVEQLLKDAHKVINTSVSHGVFHRNNAARKSSRLDAYAFKIQNKTAN.

It belongs to the bacterial ribosomal protein bS20 family.

In terms of biological role, binds directly to 16S ribosomal RNA. The polypeptide is Small ribosomal subunit protein bS20 (Mycoplasma mobile (strain ATCC 43663 / 163K / NCTC 11711) (Mesomycoplasma mobile)).